A 303-amino-acid chain; its full sequence is ATP phosphoribosyltransferase (303 aa).

Belongs to the ATP phosphoribosyltransferase family. Long subfamily. Mg(2+) serves as cofactor.

It is found in the cytoplasm. It carries out the reaction 1-(5-phospho-beta-D-ribosyl)-ATP + diphosphate = 5-phospho-alpha-D-ribose 1-diphosphate + ATP. The protein operates within amino-acid biosynthesis; L-histidine biosynthesis; L-histidine from 5-phospho-alpha-D-ribose 1-diphosphate: step 1/9. With respect to regulation, feedback inhibited by histidine. Its function is as follows. Catalyzes the condensation of ATP and 5-phosphoribose 1-diphosphate to form N'-(5'-phosphoribosyl)-ATP (PR-ATP). Has a crucial role in the pathway because the rate of histidine biosynthesis seems to be controlled primarily by regulation of HisG enzymatic activity. The protein is ATP phosphoribosyltransferase of Haemophilus influenzae (strain PittEE).